The chain runs to 219 residues: MFIEIAGILGAADLRLADTVFAQKDAFESGARTAGRIARAVKNNEQAKPAGLAADLTMLVEKRLMKNDVFRAAARPRNFIRILLSRYTQGMAYGLHSDDAFMERQRVDLSFTLFLSPPESYEGGELIVEEPAGERLVKLEAGSLVLYPSATLHRVAEVTSGERRAAVGWIRSLVRSAEDRETLFDVALALRQAEAAGDRALTDRLLKIQGSLLRRWGED.

The Fe2OG dioxygenase domain maps to Asn78–Ser172. Fe cation-binding residues include His96, Asp98, and His153. Residue Arg163 participates in 2-oxoglutarate binding.

It depends on Fe(2+) as a cofactor. The cofactor is L-ascorbate.

The sequence is that of PKHD-type hydroxylase Plav_0037 from Parvibaculum lavamentivorans (strain DS-1 / DSM 13023 / NCIMB 13966).